The sequence spans 427 residues: Neuronal pentraxin-2 (427 aa).

A signal peptide spans 1 to 17; sequence MLALLAAGVAFAVVVLA. 2 N-linked (GlcNAc...) asparagine glycosylation sites follow: Asn-144 and Asn-185. A Pentraxin (PTX) domain is found at 219-420; it reads DAFKVSLPFR…GASKWPVETC (202 aa). Cys-249 and Cys-309 are joined by a disulfide. The Ca(2+) site is built by Asn-273, Glu-351, Gln-352, Asp-353, and Gln-363. A glycan (N-linked (GlcNAc...) asparagine) is linked at Asn-389.

As to quaternary structure, homooligomer or heterooligomer (probably pentamer) with neuronal pentraxin receptor (NPTXR). Ca(2+) is required as a cofactor. Testis specific.

The protein resides in the cytoplasmic vesicle. Its subcellular location is the secretory vesicle. The protein localises to the acrosome lumen. May be involved in binding, concentrating, and sorting soluble glycoproteins or glycolipids that are destined for the acrosome. This chain is Neuronal pentraxin-2 (NPTX2), found in Cavia porcellus (Guinea pig).